A 504-amino-acid polypeptide reads, in one-letter code: MTLGIFRRVFLMLSVALGLTKGDLVKPSRGQLVNCTCENPHCKRPICQGAWCTVVLVREQGRHPQVYRGCGSLNQELCLGRPTEFVNHHCCYRSFCNHNVSLMLEATQTPSEEPEVDAHLPLILGPVLALLVLVALGTLGLWRVRRRQEKQRGLHSDLGESSLILKASEQGDSMLGDFLVSDCTTGSGSGLPFLVQRTVARQVALVECVGKGRYGEVWRGSWHGESVAVKIFSSRDEQSWFRETEIYNTVLLRHDNILGFIASDMTSRNSSTQLWLITHYHEHGSLYDFLQRQTLEPQLALRLAVSAACGLAHLHVEIFGTQGKPAIAHRDLKSRNVLVKSNLQCCIADLGLAVMHSQSSDYLDIGNNPRVGTKRYMAPEVLDEQIRTDCFESYKWTDIWAFGLVLWEIARRTIINGIVEDYRPPFYDMVPNDPSFEDMKKVVCVDQQTPTIPNRLAADPVLSGLAQMMRECWYPNPSARLTALRIKKTLQKLSQNPEKPKVIH.

A signal peptide spans 1-20 (MTLGIFRRVFLMLSVALGLT). Topologically, residues 21–121 (KGDLVKPSRG…EEPEVDAHLP (101 aa)) are extracellular. The N-linked (GlcNAc...) asparagine glycan is linked to Asn-34. Disulfide bonds link Cys-35-Cys-52, Cys-37-Cys-42, and Cys-47-Cys-70. Residues 74–77 (NQEL) are mediates specificity for BMP ligand. 2 disulfides stabilise this stretch: Cys-78–Cys-90 and Cys-91–Cys-96. Asn-99 carries N-linked (GlcNAc...) asparagine glycosylation. Residues 122–142 (LILGPVLALLVLVALGTLGLW) form a helical membrane-spanning segment. Residues 143–504 (RVRRRQEKQR…QNPEKPKVIH (362 aa)) lie on the Cytoplasmic side of the membrane. Phosphoserine occurs at positions 156, 161, and 162. The GS domain maps to 173-202 (SMLGDFLVSDCTTGSGSGLPFLVQRTVARQ). Residues 203 to 504 (VALVECVGKG…QNPEKPKVIH (302 aa)) enclose the Protein kinase domain. ATP-binding positions include 209–217 (VGKGRYGEV) and Lys-230. The active-site Proton acceptor is the Asp-331.

Belongs to the protein kinase superfamily. TKL Ser/Thr protein kinase family. TGFB receptor subfamily. As to quaternary structure, interacts with TSC22D1/TSC-22. It depends on Mg(2+) as a cofactor. Mn(2+) is required as a cofactor. Urogenital ridge, testis, ovary, brain and lung. In lung, found exclusively in pulmonary vessels of all sizes. Also expressed in aorta, vena cava and certain blood vessels of kidney, spleen, heart and intestine. For most blood vessels, a higher level of expression is found in endothelium than in adjacent smooth muscle.

The protein resides in the cell membrane. The catalysed reaction is L-threonyl-[receptor-protein] + ATP = O-phospho-L-threonyl-[receptor-protein] + ADP + H(+). The enzyme catalyses L-seryl-[receptor-protein] + ATP = O-phospho-L-seryl-[receptor-protein] + ADP + H(+). Its function is as follows. Type I receptor for TGF-beta family ligands BMP9/GDF2 and BMP10 and important regulator of normal blood vessel development. On ligand binding, forms a receptor complex consisting of two type II and two type I transmembrane serine/threonine kinases. Type II receptors phosphorylate and activate type I receptors which autophosphorylate, then bind and activate SMAD transcriptional regulators. May bind activin as well. In Rattus norvegicus (Rat), this protein is Activin receptor type-1-like (Acvrl1).